The chain runs to 1254 residues: Zinc finger protein BRUTUS (1254 aa).

The tract at residues 1 to 40 is disordered; the sequence is MATPLPDFETARGGGAVASSSTTVLPSSVSSSSSSSRPLP. Over residues 19 to 40 the composition is skewed to low complexity; it reads SSSTTVLPSSVSSSSSSSRPLP. A helical membrane pass occupies residues 201-221; that stretch reads FLCSIPVNMLAVFLPWISSSI. Residues 893–913 form a disordered region; the sequence is GSPDSSSTETSKPSPQKDNDH. A compositionally biased stretch (polar residues) spans 895 to 906; sequence PDSSSTETSKPS. Residues 999–1068 form a CHY-type zinc finger; sequence PEKQIYGCEH…PICTTPSCDG (70 aa). 24 residues coordinate Zn(2+): C1006, H1008, C1019, C1020, C1026, C1029, H1030, H1036, C1048, C1051, C1061, C1066, C1076, C1079, H1090, C1091, C1094, C1097, H1109, C1110, C1113, C1116, H1124, and C1126. The CTCHY-type zinc-finger motif lies at 1071 to 1134; the sequence is MAKHYCSICK…KCLEKSLETN (64 aa). Residues 1135 to 1176 form an RING-type; atypical zinc finger; that stretch reads CPICCEFLFTSSEAVRALPCGHYMHSACFQAYTCSHYTCPIC.

In terms of assembly, interacts with the PYEL proteins bHLH115, bHLH104 and ILR3 in the nucleus. Binds zinc and iron ions. As to expression, expressed in cotyledons of seedlings, young leaves, developing and mature embryos, and other reproductive tissues including floral vasculature, funiculus, septum, and gynoecium valves.

It is found in the membrane. The protein resides in the nucleus. The protein operates within protein modification; protein ubiquitination. In terms of biological role, essential protein. Negatively regulates the response to iron deficiency and thus contributes to iron homeostasis. Exhibits E3 ubiquitin-protein ligase activity in vitro. Plays a role in root growth, rhizosphere acidification, and iron reductase activity in response to iron deprivation. Facilitates 26S proteasome-mediated degradation of PYEL proteins in the absence of iron. The chain is Zinc finger protein BRUTUS from Arabidopsis thaliana (Mouse-ear cress).